The following is a 262-amino-acid chain: Type III pantothenate kinase (262 aa).

Residue 12 to 19 (DIGNTSIA) coordinates ATP. Substrate is bound by residues Tyr-94 and 109 to 112 (GSDV). Asp-111 functions as the Proton acceptor in the catalytic mechanism. Asp-132 serves as a coordination point for K(+). Residue Thr-135 coordinates ATP. Thr-187 serves as a coordination point for substrate.

The protein belongs to the type III pantothenate kinase family. In terms of assembly, homodimer. It depends on NH4(+) as a cofactor. The cofactor is K(+).

The protein localises to the cytoplasm. The enzyme catalyses (R)-pantothenate + ATP = (R)-4'-phosphopantothenate + ADP + H(+). It functions in the pathway cofactor biosynthesis; coenzyme A biosynthesis; CoA from (R)-pantothenate: step 1/5. In terms of biological role, catalyzes the phosphorylation of pantothenate (Pan), the first step in CoA biosynthesis. This is Type III pantothenate kinase from Borreliella burgdorferi (strain ATCC 35210 / DSM 4680 / CIP 102532 / B31) (Borrelia burgdorferi).